A 267-amino-acid chain; its full sequence is Methylglyoxal reductase DkgB (267 aa).

Catalysis depends on Tyr39, which acts as the Proton donor. Residue His97 participates in substrate binding. 179–231 (MTLAYGKALKDEVIARIAVKHNATPVQVILAWAMGEGYSVIPSSTRRENLASN) contacts NADP(+).

It belongs to the aldo/keto reductase family. In terms of assembly, monomer.

It localises to the cytoplasm. The enzyme catalyses hydroxyacetone + NADP(+) = methylglyoxal + NADPH + H(+). Functionally, aldo-keto reductase that significantly contributes to cellular methylglyoxal detoxification by catalyzing the NADPH-dependent conversion of methylglyoxal to acetol. The sequence is that of Methylglyoxal reductase DkgB from Salmonella typhi.